The primary structure comprises 644 residues: 3D-(3,5/4)-trihydroxycyclohexane-1,2-dione hydrolase 2 (644 aa).

E65 is a binding site for thiamine diphosphate. Positions 442–522 are thiamine pyrophosphate binding; that stretch reads SLPGDLQRMW…INVLLFDNSG (81 aa). The Mg(2+) site is built by D493 and N520.

It belongs to the TPP enzyme family. The cofactor is Mg(2+). Thiamine diphosphate serves as cofactor.

The catalysed reaction is 3D-3,5/4-trihydroxycyclohexane-1,2-dione + H2O = 5-deoxy-D-glucuronate + H(+). The protein operates within polyol metabolism; myo-inositol degradation into acetyl-CoA; acetyl-CoA from myo-inositol: step 3/7. In terms of biological role, involved in the cleavage of the C1-C2 bond of 3D-(3,5/4)-trihydroxycyclohexane-1,2-dione (THcHDO) to yield 5-deoxy-glucuronate (5DG). The chain is 3D-(3,5/4)-trihydroxycyclohexane-1,2-dione hydrolase 2 from Bacillus cereus (strain ZK / E33L).